The following is a 98-amino-acid chain: MSLVHMNILLAFTMSLTGLLMYRSHLMSALLCLEGMMLSLFILMTITILNMHFTLASMTPIILLVFAACEAAVGLALLVKISNTYGTDHVQNLNLLQC.

Helical transmembrane passes span 1–21 (MSLV…GLLM), 29–49 (ALLC…ITIL), and 59–79 (TPII…ALLV).

This sequence belongs to the complex I subunit 4L family. As to quaternary structure, core subunit of respiratory chain NADH dehydrogenase (Complex I) which is composed of 45 different subunits.

It localises to the mitochondrion inner membrane. It catalyses the reaction a ubiquinone + NADH + 5 H(+)(in) = a ubiquinol + NAD(+) + 4 H(+)(out). Core subunit of the mitochondrial membrane respiratory chain NADH dehydrogenase (Complex I) which catalyzes electron transfer from NADH through the respiratory chain, using ubiquinone as an electron acceptor. Part of the enzyme membrane arm which is embedded in the lipid bilayer and involved in proton translocation. The protein is NADH-ubiquinone oxidoreductase chain 4L (MT-ND4L) of Lipotes vexillifer (Yangtze river dolphin).